We begin with the raw amino-acid sequence, 303 residues long: MSSEVETQQQQPDALEGKAGQEPAATVGDKKVIATKVLGTVKWFNVRNGYGFINRNDTKEDVFVHQTAIKKNNPRKYLRSVGDGETVEFDVVEGEKGAEAANVTGPEGVPVQGSKYAADRNHYRRYPRRRGPPRNYQQNYQNNESGEKAEENESAPEGDDSNQQRPYHRRRFPPYYSRRPYGRRPQYSNAPVQGEEAEGADSQGTDEQGRPARQNMYRGFRPRFRRGPPRQRQPREEGNEEDKENQGDETQSQPPPQRRYRRNFNYRRRRPENPKSQDGKETKAAETSAENTSTPEAEQGGAE.

Over residues 1–12 (MSSEVETQQQQP) the composition is skewed to polar residues. Residues 1-28 (MSSEVETQQQQPDALEGKAGQEPAATVG) form a disordered region. One can recognise a CSD domain in the interval 39–103 (GTVKWFNVRN…GEKGAEAANV (65 aa)). Positions 43 to 48 (WFNVRN) are C5-methylcytosine binding. Positions 98-303 (AEAANVTGPE…TPEAEQGGAE (206 aa)) are disordered. Over residues 122–132 (HYRRYPRRRGP) the composition is skewed to basic residues. Low complexity-rich tracts occupy residues 133 to 143 (PRNYQQNYQNN) and 173 to 187 (PPYYSRRPYGRRPQY). Basic residues-rich tracts occupy residues 220–229 (FRPRFRRGPP) and 258–270 (RRYRRNFNYRRRR). The span at 271–284 (PENPKSQDGKETKA) shows a compositional bias: basic and acidic residues.

The protein belongs to the YBX1 family.

It is found in the cytoplasm. It localises to the nucleus. The protein localises to the cytoplasmic granule. The protein resides in the secreted. Its subcellular location is the extracellular exosome. It is found in the P-body. Its function is as follows. DNA- and RNA-binding protein involved in various processes, such as translational repression, RNA stabilization, mRNA splicing and transcription regulation. Binds preferentially to the 5'-[CU]CUGCG-3' RNA motif and specifically recognizes mRNA transcripts modified by C5-methylcytosine (m5C). Promotes mRNA stabilization: acts by binding to m5C-containing mRNAs and preventing mRNA decay. Plays a role in the maternal-to-zygotic transition in early embryo by binding to m5C-containing maternal mRNAs and preventing their degradation. Also promotes maternal-to-zygotic transition in oocytes and embryos by promoting translation repression; molecular mechanisms governing translation repression are unknown. Plays a key role in RNA composition of extracellular exosomes by defining the sorting of small non-coding RNAs, such as tRNAs, Y RNAs, Vault RNAs and miRNAs. Probably sorts RNAs in exosomes by recognizing and binding C5-methylcytosine (m5C)-containing RNAs. Acts as a key effector of epidermal progenitors by preventing epidermal progenitor senescence: acts by regulating the translation of a senescence-associated subset of cytokine mRNAs, possibly by binding to m5C-containing mRNAs. Also involved in pre-mRNA alternative splicing regulation: binds to splice sites in pre-mRNA and regulates splice site selection. Also able to bind DNA and regulate transcription. Binds to promoters that contain a Y-box (5'-CTGATTGGCCAA-3'). Promotes separation of DNA strands that contain mismatches or are modified by cisplatin. Has endonucleolytic activity and can introduce nicks or breaks into double-stranded DNA, suggesting a role in DNA repair. The secreted form acts as an extracellular mitogen and stimulates cell migration and proliferation. The protein is Y-box-binding protein 1 of Xenopus laevis (African clawed frog).